Consider the following 225-residue polypeptide: Protein GrpE (225 aa).

2 disordered regions span residues 1 to 44 (MTEE…ENAG) and 183 to 225 (VAVA…PDEG).

Belongs to the GrpE family. As to quaternary structure, homodimer.

It localises to the cytoplasm. In terms of biological role, participates actively in the response to hyperosmotic and heat shock by preventing the aggregation of stress-denatured proteins, in association with DnaK and GrpE. It is the nucleotide exchange factor for DnaK and may function as a thermosensor. Unfolded proteins bind initially to DnaJ; upon interaction with the DnaJ-bound protein, DnaK hydrolyzes its bound ATP, resulting in the formation of a stable complex. GrpE releases ADP from DnaK; ATP binding to DnaK triggers the release of the substrate protein, thus completing the reaction cycle. Several rounds of ATP-dependent interactions between DnaJ, DnaK and GrpE are required for fully efficient folding. In Streptomyces coelicolor (strain ATCC BAA-471 / A3(2) / M145), this protein is Protein GrpE.